The primary structure comprises 429 residues: Phosphoglucosamine mutase (429 aa).

S96 (phosphoserine intermediate) is an active-site residue. Mg(2+) is bound by residues S96, D230, D232, and D234. S96 bears the Phosphoserine mark.

This sequence belongs to the phosphohexose mutase family. The cofactor is Mg(2+). In terms of processing, activated by phosphorylation.

It carries out the reaction alpha-D-glucosamine 1-phosphate = D-glucosamine 6-phosphate. Catalyzes the conversion of glucosamine-6-phosphate to glucosamine-1-phosphate. The chain is Phosphoglucosamine mutase from Thermotoga maritima (strain ATCC 43589 / DSM 3109 / JCM 10099 / NBRC 100826 / MSB8).